The chain runs to 285 residues: Phosphate import ATP-binding protein PstB (285 aa).

The ABC transporter domain occupies 22 to 262; sequence MRAVDLTLGF…PQHEETVRYF (241 aa). 54 to 61 provides a ligand contact to ATP; sequence GPTGSGKT. A disordered region spans residues 266–285; sequence RPAQGSDRGSSQTAGVAESQ. The span at 272 to 285 shows a compositional bias: polar residues; it reads DRGSSQTAGVAESQ.

Belongs to the ABC transporter superfamily. Phosphate importer (TC 3.A.1.7) family. In terms of assembly, the complex is composed of two ATP-binding proteins (PstB), two transmembrane proteins (PstC and PstA) and a solute-binding protein (PstS).

Its subcellular location is the cell membrane. The catalysed reaction is phosphate(out) + ATP + H2O = ADP + 2 phosphate(in) + H(+). Functionally, part of the ABC transporter complex PstSACB involved in phosphate import. Responsible for energy coupling to the transport system. The sequence is that of Phosphate import ATP-binding protein PstB from Mycobacterium intracellulare.